We begin with the raw amino-acid sequence, 200 residues long: Oligoribonuclease (200 aa).

Positions 20 to 183 (LVWLDMEMTG…ADIHESIDEL (164 aa)) constitute an Exonuclease domain. Tyr141 is a catalytic residue.

Belongs to the oligoribonuclease family.

It is found in the cytoplasm. In terms of biological role, 3'-to-5' exoribonuclease specific for small oligoribonucleotides. The chain is Oligoribonuclease from Burkholderia vietnamiensis (strain G4 / LMG 22486) (Burkholderia cepacia (strain R1808)).